A 142-amino-acid chain; its full sequence is ATP synthase epsilon chain (142 aa).

This sequence belongs to the ATPase epsilon chain family. F-type ATPases have 2 components, CF(1) - the catalytic core - and CF(0) - the membrane proton channel. CF(1) has five subunits: alpha(3), beta(3), gamma(1), delta(1), epsilon(1). CF(0) has three main subunits: a, b and c.

It localises to the cell inner membrane. Functionally, produces ATP from ADP in the presence of a proton gradient across the membrane. This Shewanella halifaxensis (strain HAW-EB4) protein is ATP synthase epsilon chain.